The primary structure comprises 678 residues: DNA ligase (678 aa).

Residues 34 to 38 (DSEYD), 83 to 84 (SL), and glutamate 114 contribute to the NAD(+) site. The N6-AMP-lysine intermediate role is filled by lysine 116. Positions 137, 176, 293, and 317 each coordinate NAD(+). Residues cysteine 411, cysteine 414, cysteine 429, and cysteine 435 each contribute to the Zn(2+) site. The region spanning 594 to 678 (PTRQPLNGES…LMAGYGQTLS (85 aa)) is the BRCT domain.

It belongs to the NAD-dependent DNA ligase family. LigA subfamily. Mg(2+) serves as cofactor. Mn(2+) is required as a cofactor.

It carries out the reaction NAD(+) + (deoxyribonucleotide)n-3'-hydroxyl + 5'-phospho-(deoxyribonucleotide)m = (deoxyribonucleotide)n+m + AMP + beta-nicotinamide D-nucleotide.. DNA ligase that catalyzes the formation of phosphodiester linkages between 5'-phosphoryl and 3'-hydroxyl groups in double-stranded DNA using NAD as a coenzyme and as the energy source for the reaction. It is essential for DNA replication and repair of damaged DNA. The polypeptide is DNA ligase (Acinetobacter baumannii (strain AB307-0294)).